Here is a 147-residue protein sequence, read N- to C-terminus: Protein J1 homolog (147 aa).

It belongs to the chordopoxvirinae J1 family. As to quaternary structure, homodimer. Part of a complex composed of A30, G7, F10 kinase, A15, D2, D3, and J1. Interacts with A45.

Its subcellular location is the virion. The protein localises to the host cytoplasm. Late protein which is a part of a large complex required for early virion morphogenesis. This complex participates in the formation of virosomes and the incorporation of virosomal contents into nascent immature virions. J1 protein is required for DNA packaging during immature virions (IV) formation. This Sheeppox virus (strain KS-1) (SPPV) protein is Protein J1 homolog.